Consider the following 453-residue polypeptide: MSDLKPMEIVRELDRYIIGQKNAKKSVAIALRNRWRRRQVPDDLRDEIAPKNIILIGPTGVGKTEIARRLARLTDSPFYKVEASKFTEVGYVGRDVESMIRDLMELTVNTLKVRQQEEVQEKAAAMAEERILDLLLPESGGPEGATLTEPHLEVVSSSSSKSSTREKLRKMLNNGKLDSRFVDIDVTGKASPMIEIFSNTGMEEMGINMKDMLGNLLPKNTKRRKVKVAEAMKILTQDEAAHLVDMEKVTADAVEMVEQSGIIFLDEIDKIAGKGNSQGPEVSKEGVQRDLLPIVEGSSVPTKYGTVKTDHILFIASGAFHIAKPSDLIPELQGRFPIRVELTSLGKDEFVRILTEPKNALILQYIALLRTEGVELEFTEDAIDKIASIAVDVNERTENIGARRLHTIMEKLLEEILFHAPDVEEKKMVVDADFVDKQLMEIVKDEDLSRYIL.

ATP-binding positions include I18, 60–65 (GVGKTE), D266, E331, and R403.

The protein belongs to the ClpX chaperone family. HslU subfamily. In terms of assembly, a double ring-shaped homohexamer of HslV is capped on each side by a ring-shaped HslU homohexamer. The assembly of the HslU/HslV complex is dependent on binding of ATP.

Its subcellular location is the cytoplasm. In terms of biological role, ATPase subunit of a proteasome-like degradation complex; this subunit has chaperone activity. The binding of ATP and its subsequent hydrolysis by HslU are essential for unfolding of protein substrates subsequently hydrolyzed by HslV. HslU recognizes the N-terminal part of its protein substrates and unfolds these before they are guided to HslV for hydrolysis. The sequence is that of ATP-dependent protease ATPase subunit HslU from Desulforapulum autotrophicum (strain ATCC 43914 / DSM 3382 / VKM B-1955 / HRM2) (Desulfobacterium autotrophicum).